A 173-amino-acid polypeptide reads, in one-letter code: NADH-ubiquinone oxidoreductase chain 6 (173 aa).

A run of 5 helical transmembrane segments spans residues 1–21, 27–47, 48–68, 87–107, and 139–159; these read MTYF…AVAS, YGVV…VSLG, VSFV…VVFV, VVGY…LGGL, and CGVG…FVVL.

The protein belongs to the complex I subunit 6 family. Core subunit of respiratory chain NADH dehydrogenase (Complex I) which is composed of 45 different subunits.

The protein resides in the mitochondrion inner membrane. It catalyses the reaction a ubiquinone + NADH + 5 H(+)(in) = a ubiquinol + NAD(+) + 4 H(+)(out). Core subunit of the mitochondrial membrane respiratory chain NADH dehydrogenase (Complex I) which catalyzes electron transfer from NADH through the respiratory chain, using ubiquinone as an electron acceptor. Essential for the catalytic activity and assembly of complex I. This Gallus gallus (Chicken) protein is NADH-ubiquinone oxidoreductase chain 6 (MT-ND6).